The following is a 680-amino-acid chain: MTMAAGPSSQEPEGLLIVKLEEDCAWSHEVPPPEPEPSPEASHLRFRRFRFQDAPGPREALSRLQELCRGWLRPEMRTKEQILELLVLEQFLTILPQEIQSRVQELRPESGEEAVTLVERMQKELGKLRQQVTNQGRGAEVLLEEPLPLETAGESPSFKLEPMETERSPGPRLQELLDPSPQRDSQAVKERALSAPWLSLFPPEGNVEDKDMTGTQLPESLEDMAMYISQEWDHQDPSKRALSRYMVQDSYENSGTLESSIPSQEVSSTHVEQGEKLWDSSVQTCKEGMNPRNPVPGVEKFENQERNVESVSPESTHPPVLLPGQARREVPWSPEQGRLDDREGHWECPPEDKIEESLVGTPSCKGLVQAKEQPKKLHLCALCGKNFSNNSNLIRHQRIHAAEKLCMDVECGEVFGGHPHFLSLHRTHIGEEAHKCLECGKCFSQNTHLTRHQRTHTGEKPFQCNACGKSFSCNSNLNRHQRTHTGEKPYKCPECGEIFAHSSNLLRHQRIHTGERPYRCSECGKSFSRSSHLVIHERTHEKERLDPFPECGQGMNDSAPFLTNHRVEKKLFECSTCGKSFRQGMHLTRHQRTHTGEKPYKCILCGENFSHRSNLIRHQRIHTGEKPYTCHECGDSFSHSSNRIRHLRTHTGERPYKCSECGESFSRSSRLTSHQRTHTG.

A Glycyl lysine isopeptide (Lys-Gly) (interchain with G-Cter in SUMO2) cross-link involves residue Lys-19. The SCAN box domain maps to 43 to 125 (HLRFRRFRFQ…TLVERMQKEL (83 aa)). The tract at residues 147–191 (LPLETAGESPSFKLEPMETERSPGPRLQELLDPSPQRDSQAVKER) is disordered. Lys-159 participates in a covalent cross-link: Glycyl lysine isopeptide (Lys-Gly) (interchain with G-Cter in SUMO2). A phosphoserine mark is found at Ser-168 and Ser-180. Glycyl lysine isopeptide (Lys-Gly) (interchain with G-Cter in SUMO2) cross-links involve residues Lys-286, Lys-300, and Lys-376. 5 consecutive C2H2-type zinc fingers follow at residues 378–400 (HLCALCGKNFSNNSNLIRHQRIH), 434–456 (HKCLECGKCFSQNTHLTRHQRTH), 462–484 (FQCNACGKSFSCNSNLNRHQRTH), 490–512 (YKCPECGEIFAHSSNLLRHQRIH), and 518–540 (YRCSECGKSFSRSSHLVIHERTH). Residues Lys-570 and Lys-579 each participate in a glycyl lysine isopeptide (Lys-Gly) (interchain with G-Cter in SUMO2) cross-link. 4 C2H2-type zinc fingers span residues 572–594 (FECSTCGKSFRQGMHLTRHQRTH), 600–622 (YKCILCGENFSHRSNLIRHQRIH), 628–650 (YTCHECGDSFSHSSNRIRHLRTH), and 656–678 (YKCSECGESFSRSSRLTSHQRTH).

This sequence belongs to the krueppel C2H2-type zinc-finger protein family. Interacts with a number of proteins involved in chromatin modification and transcriptional corepression including DNMT1, DNMT3A, HDAC2, PHF8, TRIM28/KAP1, SETDB1, EZH2, UHRF1, CBX3/HP1-gamma, and CBX5/HP1-alpha; recruits these proteins to the SIX3 promoter region, leading to SIX3 transcriptional repression. Interacts with MAPK3/ERK1 and MAPK1/ERK2. Ubiquitinated, leading to proteasomal degradation. In terms of tissue distribution, expressed in Purkinje cells in the brain (at protein level).

The protein localises to the nucleus. Functionally, transcription factor that binds to the consensus sequence 5'-TCCTCCC-3' and acts as a transcriptional repressor. Binds to the promoter region of SIX3 and recruits other proteins involved in chromatin modification and transcriptional corepression, resulting in methylation of the promoter and transcriptional repression. Acts as a transcriptional repressor of HS3ST1 and HS3ST3A1 via binding to gene promoter regions. This is Zinc finger protein 263 from Mus musculus (Mouse).